A 252-amino-acid chain; its full sequence is Imidazole glycerol phosphate synthase subunit HisF (252 aa).

Residues aspartate 11 and aspartate 130 contribute to the active site.

It belongs to the HisA/HisF family. Heterodimer of HisH and HisF.

It is found in the cytoplasm. The catalysed reaction is 5-[(5-phospho-1-deoxy-D-ribulos-1-ylimino)methylamino]-1-(5-phospho-beta-D-ribosyl)imidazole-4-carboxamide + L-glutamine = D-erythro-1-(imidazol-4-yl)glycerol 3-phosphate + 5-amino-1-(5-phospho-beta-D-ribosyl)imidazole-4-carboxamide + L-glutamate + H(+). The protein operates within amino-acid biosynthesis; L-histidine biosynthesis; L-histidine from 5-phospho-alpha-D-ribose 1-diphosphate: step 5/9. Functionally, IGPS catalyzes the conversion of PRFAR and glutamine to IGP, AICAR and glutamate. The HisF subunit catalyzes the cyclization activity that produces IGP and AICAR from PRFAR using the ammonia provided by the HisH subunit. This is Imidazole glycerol phosphate synthase subunit HisF from Desulforamulus reducens (strain ATCC BAA-1160 / DSM 100696 / MI-1) (Desulfotomaculum reducens).